A 93-amino-acid polypeptide reads, in one-letter code: Small ribosomal subunit protein uS19 (93 aa).

It belongs to the universal ribosomal protein uS19 family.

Its function is as follows. Protein S19 forms a complex with S13 that binds strongly to the 16S ribosomal RNA. In Geotalea uraniireducens (strain Rf4) (Geobacter uraniireducens), this protein is Small ribosomal subunit protein uS19.